The chain runs to 92 residues: Small ribosomal subunit protein uS19 (92 aa).

Belongs to the universal ribosomal protein uS19 family.

In terms of biological role, protein S19 forms a complex with S13 that binds strongly to the 16S ribosomal RNA. This is Small ribosomal subunit protein uS19 from Corynebacterium jeikeium (strain K411).